A 99-amino-acid polypeptide reads, in one-letter code: Plastocyanin (99 aa).

Residues 1–99 (IEILLGGDDG…AGMVGKVTVN (99 aa)) form the Plastocyanin-like domain. Cu cation contacts are provided by His-37, Cys-84, His-87, and Met-92.

The protein belongs to the plastocyanin family. Cu(2+) serves as cofactor.

The protein localises to the plastid. The protein resides in the chloroplast thylakoid membrane. Its function is as follows. Participates in electron transfer between P700 and the cytochrome b6-f complex in photosystem I. The polypeptide is Plastocyanin (PETE) (Cucumis sativus (Cucumber)).